The chain runs to 134 residues: MTSEAVRRVQSGSPWEESFGFARAVAAGDRVIVAGTTAFKGDMLYGEGDPYEQTKVAFGTAVEAIAEFGLGIESVIRTRVCLAHSRDVDAVGRAHKELFDSVRPVTTLLVVQGFIDSRVLVSVEVEAYRGAVDS.

This is an uncharacterized protein from Streptomyces coelicolor (strain ATCC BAA-471 / A3(2) / M145).